A 93-amino-acid chain; its full sequence is Phosphoribosyl-ATP pyrophosphatase (93 aa).

Belongs to the PRA-PH family.

The protein localises to the cytoplasm. It catalyses the reaction 1-(5-phospho-beta-D-ribosyl)-ATP + H2O = 1-(5-phospho-beta-D-ribosyl)-5'-AMP + diphosphate + H(+). It functions in the pathway amino-acid biosynthesis; L-histidine biosynthesis; L-histidine from 5-phospho-alpha-D-ribose 1-diphosphate: step 2/9. The polypeptide is Phosphoribosyl-ATP pyrophosphatase (Mycobacterium sp. (strain JLS)).